A 533-amino-acid polypeptide reads, in one-letter code: ATP synthase F(1) complex catalytic subunit beta, mitochondrial (533 aa).

The transit peptide at 1–53 (MLGLAGRCSAAAASAARPALRRAAGPSHGFLPLLLSRGAGPAAAVGARRDHAA) directs the protein to the mitochondrion. Residues G214, V215, G216, K217, T218, and V219 each contribute to the ADP site. ATP is bound at residue G214. Phosphate contacts are provided by G214, V215, G216, K217, and T218. Positions 216, 217, 218, and 219 each coordinate ATP. Position 218 (T218) interacts with Mg(2+). Residue E243 participates in Mg(2+) binding. R244 contributes to the ATP binding site.

In terms of assembly, homotrimer. Component of the ATP synthase complex composed at least of ATP5F1A/subunit alpha, ATP5F1B/subunit beta, ATP5MC1/subunit c (homooctomer), MT-ATP6/subunit a, MT-ATP8/subunit 8, ATP5ME/subunit e, ATP5MF/subunit f, ATP5MG/subunit g, ATP5MK/subunit k, ATP5MJ/subunit j, ATP5F1C/subunit gamma, ATP5F1D/subunit delta, ATP5F1E/subunit epsilon, ATP5PF/subunit F6, ATP5PB/subunit b, ATP5PD/subunit d, ATP5PO/subunit OSCP. ATP synthase complex consists of a soluble F(1) head domain (subunits alpha(3) and beta(3)) - the catalytic core - and a membrane F(0) domain - the membrane proton channel (subunits c, a, 8, e, f, g, k and j). These two domains are linked by a central stalk (subunits gamma, delta, and epsilon) rotating inside the F1 region and a stationary peripheral stalk (subunits F6, b, d, and OSCP).

The protein resides in the mitochondrion inner membrane. It carries out the reaction ATP + H2O + 4 H(+)(in) = ADP + phosphate + 5 H(+)(out). Its function is as follows. Catalytic subunit beta, of the mitochondrial membrane ATP synthase complex (F(1)F(0) ATP synthase or Complex V) that produces ATP from ADP in the presence of a proton gradient across the membrane which is generated by electron transport complexes of the respiratory chain. ATP synthase complex consist of a soluble F(1) head domain - the catalytic core - and a membrane F(1) domain - the membrane proton channel. These two domains are linked by a central stalk rotating inside the F(1) region and a stationary peripheral stalk. During catalysis, ATP synthesis in the catalytic domain of F(1) is coupled via a rotary mechanism of the central stalk subunits to proton translocation. In vivo, can only synthesize ATP although its ATP hydrolase activity can be activated artificially in vitro. With the subunit alpha (ATP5F1A), forms the catalytic core in the F(1) domain. In Gallus gallus (Chicken), this protein is ATP synthase F(1) complex catalytic subunit beta, mitochondrial.